The chain runs to 411 residues: Serine--tRNA ligase (411 aa).

226 to 228 (TSE) provides a ligand contact to L-serine. 257-259 (RKE) is a binding site for ATP. L-serine is bound at residue E280. 344 to 347 (EISS) contributes to the ATP binding site. S379 provides a ligand contact to L-serine.

Belongs to the class-II aminoacyl-tRNA synthetase family. Type-1 seryl-tRNA synthetase subfamily. In terms of assembly, homodimer. The tRNA molecule binds across the dimer.

It localises to the cytoplasm. It catalyses the reaction tRNA(Ser) + L-serine + ATP = L-seryl-tRNA(Ser) + AMP + diphosphate + H(+). The enzyme catalyses tRNA(Sec) + L-serine + ATP = L-seryl-tRNA(Sec) + AMP + diphosphate + H(+). It participates in aminoacyl-tRNA biosynthesis; selenocysteinyl-tRNA(Sec) biosynthesis; L-seryl-tRNA(Sec) from L-serine and tRNA(Sec): step 1/1. Catalyzes the attachment of serine to tRNA(Ser). Is also able to aminoacylate tRNA(Sec) with serine, to form the misacylated tRNA L-seryl-tRNA(Sec), which will be further converted into selenocysteinyl-tRNA(Sec). The protein is Serine--tRNA ligase of Campylobacter jejuni subsp. jejuni serotype O:23/36 (strain 81-176).